Consider the following 192-residue polypeptide: UPF0462 protein C4orf33 homolog (192 aa).

The protein belongs to the UPF0462 family.

The polypeptide is UPF0462 protein C4orf33 homolog (D3Ertd751e) (Mus musculus (Mouse)).